Reading from the N-terminus, the 218-residue chain is Ornithine decarboxylase antizyme 2 (218 aa).

It belongs to the ODC antizyme family. Interacts with ODC1 and thereby sterically blocks ODC homodimerization. In terms of tissue distribution, expressed ubiquitously in 24 hours embryos, with highest levels in telencephalon, lens, retina, cerebellum and hindbrain primordia.

Ornithine decarboxylase (ODC) antizyme protein that negatively regulates ODC activity and intracellular polyamine biosynthesis and uptake in response to increased intracellular polyamine levels. Binds to ODC monomers, inhibiting the assembly of the functional ODC homodimers. Does not target the ODC monomers for degradation, which allows a protein synthesis-independent restoration of ODC activity. The polypeptide is Ornithine decarboxylase antizyme 2 (oaz1b) (Danio rerio (Zebrafish)).